The primary structure comprises 163 residues: Epithelial membrane protein 3 (163 aa).

The helical transmembrane segment at 4–24 (LLLVVSALHILILILLFVATL) threads the bilayer. 2 N-linked (GlcNAc...) asparagine glycosylation sites follow: Asn49 and Asn56. 3 helical membrane-spanning segments follow: residues 66–86 (VQVL…LFMF), 100–120 (TGFC…IYAI), and 139–159 (FALA…YIHL).

This sequence belongs to the PMP-22/EMP/MP20 family.

The protein resides in the membrane. Functionally, probably involved in cell proliferation and cell-cell interactions. This chain is Epithelial membrane protein 3 (EMP3), found in Bos taurus (Bovine).